We begin with the raw amino-acid sequence, 331 residues long: Glyceraldehyde-3-phosphate dehydrogenase 2 (331 aa).

Residues R11 to I12, D33, and R78 each bind NAD(+). Residues S148–T150, T179, T208–G209, and R231 each bind D-glyceraldehyde 3-phosphate. The active-site Nucleophile is the C149. N313 provides a ligand contact to NAD(+).

This sequence belongs to the glyceraldehyde-3-phosphate dehydrogenase family. In terms of assembly, homotetramer.

The protein localises to the cytoplasm. The enzyme catalyses D-glyceraldehyde 3-phosphate + phosphate + NAD(+) = (2R)-3-phospho-glyceroyl phosphate + NADH + H(+). The protein operates within carbohydrate degradation; glycolysis; pyruvate from D-glyceraldehyde 3-phosphate: step 1/5. The chain is Glyceraldehyde-3-phosphate dehydrogenase 2 (GAP2) from Kluyveromyces marxianus (Yeast).